A 1238-amino-acid polypeptide reads, in one-letter code: Erythroid differentiation-related factor 1 (1238 aa).

Disordered regions lie at residues 1-38 (MGDAKEAGAEGPPAGAAARGGLSLLSQGESEESSAQGS), 220-268 (QPVS…GSEP), 517-561 (PKKE…SDDS), and 620-647 (KKESDLPAADPSTPIPLKYEDESSRGGP). Low complexity-rich tracts occupy residues 9 to 38 (AEGPPAGAAARGGLSLLSQGESEESSAQGS), 223 to 241 (SSTAEQQESSSSDQTNDSE), and 253 to 263 (SSVSEDPSASS). The segment covering 530–547 (NSDESYSEEEEEMPDSDE) has biased composition (acidic residues). TPR repeat units follow at residues 693 to 726 (SKAYYVLSDAAMSLQKYGRALRYIKLALQSHDTY) and 914 to 953 (AQAHCGAGDELKREFSPEEGLYYNKAIDYYLKALRSLGTR).

The protein localises to the nucleus. Its function is as follows. Transcription factor involved in erythroid differentiation. Involved in transcriptional activation of the globin gene. The chain is Erythroid differentiation-related factor 1 (EDRF1) from Homo sapiens (Human).